The chain runs to 172 residues: UPF0398 protein gbs0290 (172 aa).

The protein belongs to the UPF0398 family.

In Streptococcus agalactiae serotype III (strain NEM316), this protein is UPF0398 protein gbs0290.